Here is a 714-residue protein sequence, read N- to C-terminus: Choline transporter-like protein 5 (714 aa).

At 1 to 33 the chain is on the cytoplasmic side; it reads MGRRSAAPTSPFGEPRKFDPKFKGPIGKRHCTD. Residues 34–54 form a helical membrane-spanning segment; that stretch reads VLCCIIFVVVILGYIALGVVA. Over 55–237 the chain is Extracellular; it reads WIHGDPRKII…KIFEDYASSW (183 aa). N-linked (GlcNAc...) asparagine glycosylation is found at Asn83, Asn132, Asn192, and Asn205. The chain crosses the membrane as a helical span at residues 238-258; it reads YWILIALFIAMVVSLLFLILL. Residues 259 to 261 are Cytoplasmic-facing; the sequence is RFT. Residues 262–282 form a helical membrane-spanning segment; it reads AGVFFWIFIIGVIGVVGYGIW. Residues 283-320 are Extracellular-facing; sequence HCFWEYDSLKGVPGADLTIYDIGLQTDFRVYLQLRQTW. A helical membrane pass occupies residues 321 to 341; the sequence is LAFMILLCIVEVIIILMLIFL. At 342–346 the chain is on the cytoplasmic side; the sequence is RNRIR. The chain crosses the membrane as a helical span at residues 347–367; that stretch reads IAIALLQEGSRAIGYIMSTLF. Topologically, residues 368 to 369 are extracellular; it reads YP. Residues 370–390 form a helical membrane-spanning segment; that stretch reads IITFILIAICISYWAVTAVFM. The Cytoplasmic segment spans residues 391–455; it reads ATSGEPIYKV…QYILIFQLCN (65 aa). The helical transmembrane segment at 456–476 threads the bilayer; sequence VFVFLWLVNFSIALGQCTLAG. Residues 477 to 510 are Extracellular-facing; the sequence is AFASYYWAFKKPADIPACPLFSSFGRAIRYHTGS. Residues 511 to 531 traverse the membrane as a helical segment; sequence LALGSLILALVQFIRIILEYL. Residues 532–605 lie on the Cytoplasmic side of the membrane; it reads DHKLKASQNS…RVAVLDKVTD (74 aa). The helical transmembrane segment at 606-626 threads the bilayer; it reads FLLFLGKVFVTGSVGVLAFFF. At 627 to 644 the chain is on the extracellular side; that stretch reads FTRKIPVLTDEAPALNYY. Residues 645–665 form a helical membrane-spanning segment; sequence WVPLLTVLIGSYLIAHGFFSV. Residues 666–711 lie on the Cytoplasmic side of the membrane; that stretch reads YAMCVDTLFLCFCEDLERNNGSSSKPYYMSPNLHRILGKKEILSKK.

It belongs to the CTL (choline transporter-like) family.

It is found in the cell membrane. It catalyses the reaction choline(out) + n H(+)(in) = choline(in) + n H(+)(out). In terms of biological role, choline/H+ antiporter. In Xenopus tropicalis (Western clawed frog), this protein is Choline transporter-like protein 5 (slc44a5).